Reading from the N-terminus, the 1432-residue chain is uncharacterized protein (1432 aa).

Disordered regions lie at residues 1-72, 208-237, 280-335, 531-607, 690-712, 738-801, 896-950, 1044-1076, and 1303-1359; these read MDTI…NYYN, NKIE…NNGQ, ERNE…ENNL, IVKS…NNSS, QNKS…TTTT, NNTL…NGGR, QSNN…SPPT, NINS…NNNN, and NNNN…NTTP. Low complexity-rich tracts occupy residues 14 to 72, 208 to 225, and 284 to 300; these read INNN…NYYN, NKIE…NNEN, and LTSP…LPSS. Acidic residues predominate over residues 315–325; the sequence is QEEEEEEEEED. 5 stretches are compositionally biased toward low complexity: residues 536-575, 583-607, 691-712, 744-779, and 896-944; these read SSSN…NKNK, DNNT…NNSS, NKSP…TTTT, NMNN…NSNN, and QSNN…SSSN. Over residues 1311-1320 the composition is skewed to gly residues; sequence NGNGNGGING. Low complexity predominate over residues 1321–1333; the sequence is NNGNNSGSNNKEN. The span at 1334-1346 shows a compositional bias: gly residues; it reads GGTGAGIGGGGGL. The span at 1347–1359 shows a compositional bias: low complexity; that stretch reads QLPNNNNNNNTTP.

This is an uncharacterized protein from Dictyostelium discoideum (Social amoeba).